We begin with the raw amino-acid sequence, 295 residues long: MERIQGRIVRGIAGFYYVATERGIIECRARGKFRKDNIIPLVGDIAEVQLVNEKEGYILEILPRKNQLVRPPVANVDQAIIVFAISKPEINRVLLDKMIVVAEINKIEPVVCINKVDMEKREEVENLINVYRKIGYKAVGTSAVTGEGMEELKSYLKDKISFFAGPSGVGKSSLINLIQSNIRLKTGELSEKLGRGRHTTRSVEFLPLDFGGYVLDTPGFTALEIDIPKEELRNYFREFIEFQENCRFNSCLHVNEPDCAVTEAVDEGIIDRQRYISYLTLLREVKEKEKRRYKN.

In terms of domain architecture, CP-type G spans 65–223 (KNQLVRPPVA…VLDTPGFTAL (159 aa)). GTP contacts are provided by residues 114-117 (NKVD) and 165-173 (GPSGVGKSS). Zn(2+) is bound by residues C246, C251, H253, and C259.

This sequence belongs to the TRAFAC class YlqF/YawG GTPase family. RsgA subfamily. As to quaternary structure, monomer. Associates with 30S ribosomal subunit, binds 16S rRNA. Zn(2+) serves as cofactor.

Its subcellular location is the cytoplasm. Functionally, one of several proteins that assist in the late maturation steps of the functional core of the 30S ribosomal subunit. Helps release RbfA from mature subunits. May play a role in the assembly of ribosomal proteins into the subunit. Circularly permuted GTPase that catalyzes slow GTP hydrolysis, GTPase activity is stimulated by the 30S ribosomal subunit. This chain is Small ribosomal subunit biogenesis GTPase RsgA, found in Caldanaerobacter subterraneus subsp. tengcongensis (strain DSM 15242 / JCM 11007 / NBRC 100824 / MB4) (Thermoanaerobacter tengcongensis).